We begin with the raw amino-acid sequence, 275 residues long: Bis(5'-nucleosyl)-tetraphosphatase, symmetrical (275 aa).

Belongs to the Ap4A hydrolase family.

The enzyme catalyses P(1),P(4)-bis(5'-adenosyl) tetraphosphate + H2O = 2 ADP + 2 H(+). In terms of biological role, hydrolyzes diadenosine 5',5'''-P1,P4-tetraphosphate to yield ADP. The sequence is that of Bis(5'-nucleosyl)-tetraphosphatase, symmetrical from Stutzerimonas stutzeri (strain A1501) (Pseudomonas stutzeri).